The chain runs to 258 residues: Small ribosomal subunit protein uS3 (258 aa).

The KH type-2 domain occupies 16–85 (IDEYLEKELE…NPQVEVKEVD (70 aa)). Positions 198-258 (RVTETPAEEA…KDADGEESEK (61 aa)) are disordered. The span at 203–245 (PAEEASEASEVVEDLEEVEDLEEIEDLEEVEDLEEVEDLEDTE) shows a compositional bias: acidic residues.

It belongs to the universal ribosomal protein uS3 family. In terms of assembly, part of the 30S ribosomal subunit.

Functionally, binds the lower part of the 30S subunit head. The protein is Small ribosomal subunit protein uS3 of Methanothermobacter thermautotrophicus (strain ATCC 29096 / DSM 1053 / JCM 10044 / NBRC 100330 / Delta H) (Methanobacterium thermoautotrophicum).